Here is a 653-residue protein sequence, read N- to C-terminus: MENIDMKYLHLLAKQYPTIAKTATEIINLEAIMNLPKGTEHFLSDVHGEYSAFEQVLRNGSGVVKRKIRDIFGDELDDAEINSLSTLIYYPEEKMDLIAEEMDDMHDWYRTTLFRLIELCQYVASKYTRSKVRKAMPEDFAYILEELLHENYNEEDKKMYYEEILQHIISLDRAAEFISALSRLIQQLVVDHLHIVGDVYDRGPYPDKIMDTLMNYHSLDFQWGNHDILWMGAASGSRVCAANVIRISARYLNLDILEDSYGISLRPLALFADEIYKNDPCTYFQPKNEDNLNYSKAEITQIARMHKAISIIQFKLEGEIINRRKEFDMNHRLLLQMIDYKKGTIHLKGKDYQLLDTHFPTIDPNDPYKLTKEEKELIEKITASFKNCRRLQKHVQFLYSKGSMFLTYNGNLLYHGCIPLYEDGTFMEMKLRGENFSGRELLEQFEILTREAYVRKPGTKEKKYACDIVWYLWTGAVSSLFGKSEMTTFERYFIAEKETHKEEKNPYYKLRNEETICKQILEEFGLDGECGHIINGHTPVKEGKGESPIKANTKMLVIDGGFAKAYHKETTLAGYTLLYNSYGLQLVSHQPFTTKEDAIKNETDILSTRQVIEMEINRKRVRDTDIGKNLNEQATDLKMLLEAYRNGSLHENS.

It belongs to the FBPase class 3 family. Requires Mn(2+) as cofactor.

It carries out the reaction beta-D-fructose 1,6-bisphosphate + H2O = beta-D-fructose 6-phosphate + phosphate. The protein operates within carbohydrate biosynthesis; gluconeogenesis. In Listeria innocua serovar 6a (strain ATCC BAA-680 / CLIP 11262), this protein is Fructose-1,6-bisphosphatase class 3.